Consider the following 521-residue polypeptide: Cytochrome P450 monooxygenase gloO (521 aa).

An N-terminal signal peptide occupies residues 1-26; the sequence is MIAALFTTNLQLGAVGVFIFALLAFA. C464 contacts heme.

It belongs to the cytochrome P450 family. The cofactor is heme.

The protein operates within mycotoxin biosynthesis. Cytochrome P450 monooxygenase; part of the gene cluster that mediates the biosynthesis of pneumocandins, lipohexapeptides of the echinocandin family that prevent fungal cell wall formation by non-competitive inhibition of beta-1,3-glucan synthase. The 10,12-dimethylmyristoyl side chain is synthesized by the reducing polyketide synthase gloL/GLPKS4. The thioesterase gloN/GLHYD exclusively interacts with gloL/GLPKS4 to maintain turnover of the polyketide side chain. The 10R,12S-dimethylmyristic acid is then transferred to the first thiolation domain of the nonribosomal peptide synthetase gloA/GLNRPS4 by the acyl-AMP ligase gloD/GLligase, followed by its acylation to L-ornithine to trigger elongation of the cyclic hexapeptide. L-ornithine, 4R-hydroxyl-L-proline (generated from L-proline by the dioxygenase gloF/GLOXY2), 3S-hydroxyl-L-homotyrosine (generated by gloG/GLHtyB, gloH/GLHtyA, gloI/GLHtyC, gloJ/GLHtyD and hydroxylated at C-3 by the dioxygenase gloM/GLOXY1), 3R-hydroxyl-L-glutamine (generated from L-glutamine probably by the dioxygenase gloE/GLOXY3) and 3S-hydroxyl-L-proline (generated from L-proline by the dioxygenase gloF/GLOXY2 to yield pneumocandin B0), or 3S-hydroxyl-4S-methyl-L-proline (generated from L-leucine by the dioxygenase gloC/GLOXY4 to yield pneumocandin A0) are sequentially added to the growing chain. The last C domain of gloA/GLNRPS4 is proposed to be responsible for cyclization by condensation to form the peptide bond between L-ornithine and 3S-hydroxyl-4S-methyl-L-proline (for pneumocandin A0) or 3S-hydroxyl-L-proline (for pneumocandin B0). Finally, the subsequent C-4 hydroxylation of 3S-hydroxyl-L-homotyrosine and L-ornithine dihydroxylation at C-4 and C-5 are performed by the cytochrome P450 monooxygenases gloP/GLP450-1 and gloO/GLP450-2, respectively. In Glarea lozoyensis (strain ATCC 20868 / MF5171), this protein is Cytochrome P450 monooxygenase gloO.